The primary structure comprises 294 residues: Large ribosomal subunit protein uL18A (294 aa).

Ser10 is subject to Phosphoserine. Tyr12 carries the phosphotyrosine modification. Ser81 is subject to Phosphoserine.

This sequence belongs to the universal ribosomal protein uL18 family. In terms of assembly, component of the large ribosomal subunit (LSU). Mature yeast ribosomes consist of a small (40S) and a large (60S) subunit. The 40S small subunit contains 1 molecule of ribosomal RNA (18S rRNA) and 33 different proteins (encoded by 57 genes). The large 60S subunit contains 3 rRNA molecules (25S, 5.8S and 5S rRNA) and 46 different proteins (encoded by 81 genes). Component of a hexameric 5S RNP precursor complex, composed of 5S RNA, rrs1, rpf2, rpl5a/rpl5b, rpl11a/rpl11b and syo1; this complex acts as a precursor for ribosome assembly. rpl5a/rpl5b/uL18 forms a heterotrimeric complex with syo1 and rpl11a/rpl11b/uL5. Interaction of this complex with KAP104 allows the nuclear import of the heterotrimer.

The protein localises to the cytoplasm. The protein resides in the nucleus. In terms of biological role, component of the ribosome, a large ribonucleoprotein complex responsible for the synthesis of proteins in the cell. The small ribosomal subunit (SSU) binds messenger RNAs (mRNAs) and translates the encoded message by selecting cognate aminoacyl-transfer RNA (tRNA) molecules. The large subunit (LSU) contains the ribosomal catalytic site termed the peptidyl transferase center (PTC), which catalyzes the formation of peptide bonds, thereby polymerizing the amino acids delivered by tRNAs into a polypeptide chain. The nascent polypeptides leave the ribosome through a tunnel in the LSU and interact with protein factors that function in enzymatic processing, targeting, and the membrane insertion of nascent chains at the exit of the ribosomal tunnel. This chain is Large ribosomal subunit protein uL18A (rpl501), found in Schizosaccharomyces pombe (strain 972 / ATCC 24843) (Fission yeast).